The sequence spans 130 residues: Protein ApaG (130 aa).

An ApaG domain is found at 3-127 (RAVTRHIEVT…FSLDSPDGKR (125 aa)).

The sequence is that of Protein ApaG from Bradyrhizobium sp. (strain ORS 278).